Here is a 114-residue protein sequence, read N- to C-terminus: U17-barytoxin-Tl1a (114 aa).

The N-terminal stretch at 1-20 is a signal peptide; that stretch reads MKTIIVFLSLLVLATKFGDA. The propeptide occupies 21–74; it reads NEGVNQEQMKEVIQNEFREDFLNEMAPMSLLQQLEAIESTLLEKEADRNSRQKR. Disulfide bonds link Cys75/Cys88, Cys82/Cys93, and Cys87/Cys108.

It belongs to the neurotoxin 14 (magi-1) family. 03 (ICK-30-40) subfamily. As to expression, expressed by the venom gland.

It is found in the secreted. Ion channel inhibitor. The sequence is that of U17-barytoxin-Tl1a from Trittame loki (Brush-footed trapdoor spider).